The following is a 99-amino-acid chain: Large ribosomal subunit protein P1 (99 aa).

Part of the 50S ribosomal subunit. Homodimer, it forms part of the ribosomal stalk which helps the ribosome interact with GTP-bound translation factors. Forms both a pentameric uL10/P0(P1)2(P1)2 and heptameric uL10/P0(P1)2(P1)2(P1)2 complex, where uL10/P0 forms an elongated spine to which the P1 dimers bind in a sequential fashion. The proportion of heptameric complexes increases during cell growth.

In terms of biological role, forms part of the ribosomal stalk, playing a central role in the interaction of the ribosome with GTP-bound translation factors. In Methanococcus vannielii, this protein is Large ribosomal subunit protein P1.